The chain runs to 902 residues: 4-hydroxyphenylacetate decarboxylase glycyl radical subunit (902 aa).

The PFL domain occupies K38–L774. 2 residues coordinate 4-hydroxyphenylacetate: S348 and C507. The active-site Cysteine radical intermediate is C507. E509 acts as the Proton donor in catalysis. The 4-hydroxyphenylacetate site is built by H540 and E641. One can recognise a Glycine radical domain in the interval G782–V902. Position 877 is a glycine radical (G877).

Belongs to the glycyl radical enzyme (GRE) family. HPAD subfamily. Heterooctamer consisting of 4 large (HpdB) subunits and 4 small (HpdC) subunits, arranged as a tetramer of heterodimers. Also forms a catalytically inactive homodimer. Post-translationally, requires the activating protein CsdA to generate the key active site glycyl radical that is involved in catalysis. In terms of processing, phosphorylated on serine. Phosphorylation may trigger the formation of the active heterooctamers and thereby regulates enzyme activity.

It catalyses the reaction 4-hydroxyphenylacetate + H(+) = 4-methylphenol + CO2. The catalysed reaction is 3,4-dihydroxyphenylacetate + H(+) = 4-methylcatechol + CO2. Functionally, glycyl radical subunit of the HPA decarboxylase that decarboxylates phenylacetates with a hydroxyl group in the p-position. Active toward 4-hydroxyphenylacetate and 3,4-dihydroxyphenylacetate, forming 4-methylphenol and 4-methylcatechol, respectively. Is likely involved in the catabolism of aromatic amino acids such as tyrosine fermentation. 4-methylphenol (p-cresol) formation provides metabolic toxicity, which allows an active suppression of other microbes and may provide growth advantages for the producers in highly competitive environments. The large subunit is the catalytic subunit that binds the substrate. The sequence is that of 4-hydroxyphenylacetate decarboxylase glycyl radical subunit from Clostridioides difficile (strain 630) (Peptoclostridium difficile).